The primary structure comprises 588 residues: Adenine deaminase (588 aa).

The protein belongs to the metallo-dependent hydrolases superfamily. Adenine deaminase family. As to quaternary structure, homodimer. Requires Mn(2+) as cofactor.

It catalyses the reaction adenine + H2O + H(+) = hypoxanthine + NH4(+). This Escherichia coli (strain K12 / DH10B) protein is Adenine deaminase.